The chain runs to 395 residues: Demethylmacrocin O-methyltransferase (395 aa).

The enzyme catalyses demethylmacrocin + S-adenosyl-L-methionine = macrocin + S-adenosyl-L-homocysteine + H(+). Its pathway is antibiotic biosynthesis; tylosin biosynthesis. Functionally, O-methyltransferase that catalyzes the conversion of demethylmacrocin to macrocin, the penultimate step of tylosin antibiotic biosynthesis. Also able to mediate the conversion of demethyllactenocin to lactenocin. The protein is Demethylmacrocin O-methyltransferase (tylE) of Streptomyces fradiae (Streptomyces roseoflavus).